The following is an 80-amino-acid chain: DNA-directed RNA polymerase subunit Rpo5 (80 aa).

Belongs to the archaeal Rpo5/eukaryotic RPB5 RNA polymerase subunit family. Part of the RNA polymerase complex.

It is found in the cytoplasm. It carries out the reaction RNA(n) + a ribonucleoside 5'-triphosphate = RNA(n+1) + diphosphate. Its function is as follows. DNA-dependent RNA polymerase (RNAP) catalyzes the transcription of DNA into RNA using the four ribonucleoside triphosphates as substrates. The chain is DNA-directed RNA polymerase subunit Rpo5 from Thermofilum pendens (strain DSM 2475 / Hrk 5).